The following is a 1140-amino-acid chain: Centrosomal protein of 135 kDa (1140 aa).

The interval 11–64 (NIRKRLDQLGYRQTLTVECLPLVEKLFSDLVHTTESLRQSKLSAVKAEKESANF) is homodimerization. 2 coiled-coil regions span residues 75 to 151 (NARL…KNLH) and 199 to 416 (LQVA…FAVT). Ser383 and Ser439 each carry phosphoserine. 3 coiled-coil regions span residues 447–644 (LKGI…LENK), 668–1036 (SLRI…LESL), and 1079–1113 (NTML…AIQE). Position 688 is a phosphoserine (Ser688). A disordered region spans residues 1114–1140 (MRRHGLATPPLSSTLRSPSHSPEHRNV). Residue Thr1121 is modified to Phosphothreonine. Positions 1121-1133 (TPPLSSTLRSPSH) are enriched in low complexity. Ser1130 carries the phosphoserine modification.

The protein belongs to the CEP135/TSGA10 family. As to quaternary structure, homodimer. Interacts with DCTN2. Interacts with CEP250.

The protein localises to the cytoplasm. It localises to the cytoskeleton. Its subcellular location is the microtubule organizing center. It is found in the centrosome. The protein resides in the centriole. Centrosomal microtubule-binding protein involved in centriole biogenesis. Acts as a scaffolding protein during early centriole biogenesis. Required for the targeting of centriole satellite proteins to centrosomes such as of PCM1, SSX2IP and CEP290 and recruitment of WRAP73 to centrioles. Also required for centriole-centriole cohesion during interphase by acting as a platform protein for CEP250 at the centriole. Required for the recruitment of CEP295 to the proximal end of new-born centrioles at the centriolar microtubule wall during early S phase in a PLK4-dependent manner. The sequence is that of Centrosomal protein of 135 kDa from Homo sapiens (Human).